Reading from the N-terminus, the 267-residue chain is Orotidine 5'-phosphate decarboxylase (267 aa).

Substrate is bound by residues D37, 59-61 (KTH), 91-100 (DRKFADIGNT), Y217, and R235. Catalysis depends on K93, which acts as the Proton donor.

This sequence belongs to the OMP decarboxylase family.

It catalyses the reaction orotidine 5'-phosphate + H(+) = UMP + CO2. The protein operates within pyrimidine metabolism; UMP biosynthesis via de novo pathway; UMP from orotate: step 2/2. The protein is Orotidine 5'-phosphate decarboxylase (URA3) of Kluyveromyces marxianus (Yeast).